Reading from the N-terminus, the 310-residue chain is MNAPKTLVIASRESALAMWQAQYIQGRLQTLYPETEVTILGMTTTGDQILDSPLARIGGKGLFVKELEQALADGRADLAVHSMKDVPMHLPPGFALAAISERDDPRDAFVSNDYPNLASLPAGSIVGTSSLRRQSQLQARFPGLKVESLRGNLQTRLRKLDEGQYAAIILAAAGLKRLGLASRIRESIDPDNSIPAVGQGALGIEINAERLDLLKVLAPLNHPETAACVEAERGMSRALAGSCQVPLGAFAQQHGDTLQMTGFVASIDGKEFLRESVQGPAEQPEALGQALAAKLVALGADRILAALPHE.

The residue at position 243 (C243) is an S-(dipyrrolylmethanemethyl)cysteine.

The protein belongs to the HMBS family. In terms of assembly, monomer. Dipyrromethane serves as cofactor.

It catalyses the reaction 4 porphobilinogen + H2O = hydroxymethylbilane + 4 NH4(+). The protein operates within porphyrin-containing compound metabolism; protoporphyrin-IX biosynthesis; coproporphyrinogen-III from 5-aminolevulinate: step 2/4. In terms of biological role, tetrapolymerization of the monopyrrole PBG into the hydroxymethylbilane pre-uroporphyrinogen in several discrete steps. This Methylobacillus flagellatus (strain ATCC 51484 / DSM 6875 / VKM B-1610 / KT) protein is Porphobilinogen deaminase.